Reading from the N-terminus, the 310-residue chain is Methionyl-tRNA formyltransferase (310 aa).

108–111 (SLLP) serves as a coordination point for (6S)-5,6,7,8-tetrahydrofolate.

Belongs to the Fmt family.

The catalysed reaction is L-methionyl-tRNA(fMet) + (6R)-10-formyltetrahydrofolate = N-formyl-L-methionyl-tRNA(fMet) + (6S)-5,6,7,8-tetrahydrofolate + H(+). In terms of biological role, attaches a formyl group to the free amino group of methionyl-tRNA(fMet). The formyl group appears to play a dual role in the initiator identity of N-formylmethionyl-tRNA by promoting its recognition by IF2 and preventing the misappropriation of this tRNA by the elongation apparatus. This chain is Methionyl-tRNA formyltransferase, found in Fusobacterium nucleatum subsp. nucleatum (strain ATCC 25586 / DSM 15643 / BCRC 10681 / CIP 101130 / JCM 8532 / KCTC 2640 / LMG 13131 / VPI 4355).